The following is a 1549-amino-acid chain: FERM and PDZ domain-containing protein 1 (1549 aa).

Residues 57–135 (TVTLDKDVLL…ALSITVVRCT (79 aa)) form the PDZ domain. Residues 181–496 (NVLKVYLENG…GYYRLFVDPA (316 aa)) enclose the FERM domain. Disordered regions lie at residues 554–618 (AREE…DDLD), 717–738 (SHLS…PPQW), 775–834 (YDAA…YAKS), 913–1046 (STNP…RSEI), 1097–1174 (SLDS…EAQE), 1231–1257 (LSPC…DDSP), and 1321–1347 (PETE…AGSQ). A compositionally biased stretch (polar residues) spans 717–730 (SHLSDSGSESTASR). Residues 924-931 (EPETMETK) are important for interaction with GPSM2. The span at 950-961 (PSNTENPVTTDG) shows a compositional bias: polar residues. The segment covering 962–980 (SSASIPHSPHHSNPGSSSP) has biased composition (low complexity). Positions 1117 to 1130 (SGKDLGDSKGDRLD) are enriched in basic and acidic residues.

As to quaternary structure, interacts with GPSM1. Interacts with GPSM2.

It is found in the cytoplasm. The protein localises to the cytosol. The protein resides in the cell membrane. Its function is as follows. Stabilizes membrane-bound GPSM1, and thereby promotes its interaction with GNAI1. This is FERM and PDZ domain-containing protein 1 (Frmpd1) from Mus musculus (Mouse).